The primary structure comprises 212 residues: Ribonuclease HII (212 aa).

Residues 17–206 enclose the RNase H type-2 domain; the sequence is RVIAGVDEAG…KSTKPQSLQT (190 aa). Aspartate 23, glutamate 24, and aspartate 115 together coordinate a divalent metal cation.

It belongs to the RNase HII family. Mn(2+) is required as a cofactor. Mg(2+) serves as cofactor.

Its subcellular location is the cytoplasm. It catalyses the reaction Endonucleolytic cleavage to 5'-phosphomonoester.. In terms of biological role, endonuclease that specifically degrades the RNA of RNA-DNA hybrids. This is Ribonuclease HII from Syntrophus aciditrophicus (strain SB).